The sequence spans 217 residues: MOB kinase activator 3A (217 aa).

Zn(2+)-binding residues include cysteine 83, cysteine 88, histidine 165, and histidine 170.

Belongs to the MOB1/phocein family.

Functionally, may regulate the activity of kinases. In Bos taurus (Bovine), this protein is MOB kinase activator 3A (MOB3A).